Here is a 129-residue protein sequence, read N- to C-terminus: Small ribosomal subunit protein uS9 (129 aa).

Belongs to the universal ribosomal protein uS9 family.

The protein is Small ribosomal subunit protein uS9 of Helicobacter hepaticus (strain ATCC 51449 / 3B1).